Reading from the N-terminus, the 126-residue chain is MADMKWAVAHIKSSFNNTIITVTDITGAETIAKSSGGMVVKAARDESSPYTAMQMAGQLADQLRDKGINGIHIRVRAPGGNKQRSPGPGAQAAIRAFARAGIRIGRIEDVTPVPHDGTRPKGGRRV.

It belongs to the universal ribosomal protein uS11 family. Part of the 30S ribosomal subunit.

Functionally, located on the platform of the 30S subunit. This chain is Small ribosomal subunit protein uS11, found in Methanosarcina mazei (strain ATCC BAA-159 / DSM 3647 / Goe1 / Go1 / JCM 11833 / OCM 88) (Methanosarcina frisia).